Here is a 316-residue protein sequence, read N- to C-terminus: Type II restriction enzyme BsuBI (316 aa).

The protein belongs to the BsuBI/PstI type II restriction endonuclease family. Homodimer. Requires Mg(2+) as cofactor.

It carries out the reaction Endonucleolytic cleavage of DNA to give specific double-stranded fragments with terminal 5'-phosphates.. Its function is as follows. A P subtype restriction enzyme that recognizes the double-stranded sequence 5'-CTGCAG-3' and cleaves after A-5. In Bacillus subtilis, this protein is Type II restriction enzyme BsuBI (hsdBR).